A 514-amino-acid polypeptide reads, in one-letter code: F-box-like/WD repeat-containing protein TBL1XR1 (514 aa).

Residue S2 is modified to N-acetylserine. The 33-residue stretch at S4–Q36 folds into the LisH domain. Residues G41–A86 form the F-box-like domain. At K102 the chain carries N6-acetyllysine. S119 is subject to Phosphoserine. Over residues Q120–E135 the composition is skewed to low complexity. Positions Q120–H139 are disordered. 8 WD repeats span residues G167–S206, P223–L262, Q264–Q303, F306–T344, G347–D386, A389–T437, K440–S479, and R481–R513. A Glycyl lysine isopeptide (Lys-Gly) (interchain with G-Cter in SUMO2) cross-link involves residue K277.

It belongs to the WD repeat EBI family. In terms of assembly, component of the N-Cor repressor complex, at least composed of NCOR1, NCOR2, HDAC3, TBL1X, TBL1XR1, CORO2A and GPS2. Probable component of some E3 ubiquitin ligase complex. Interacts with histones H2B and H4. Interacts with MECP2; bridges interaction between MECP2 and NCOR1. Interacts with USP44. As to expression, widely expressed including the pituitary, hypothalamus, white and brown adipose tissue, muscle and liver.

Its subcellular location is the nucleus. In terms of biological role, F-box-like protein involved in the recruitment of the ubiquitin/19S proteasome complex to nuclear receptor-regulated transcription units. Plays an essential role in transcription activation mediated by nuclear receptors. Probably acts as integral component of the N-Cor corepressor complex that mediates the recruitment of the 19S proteasome complex, leading to the subsequent proteasomal degradation of N-Cor complex, thereby allowing cofactor exchange, and transcription activation. The chain is F-box-like/WD repeat-containing protein TBL1XR1 (TBL1XR1) from Homo sapiens (Human).